A 268-amino-acid chain; its full sequence is Orotidine 5'-phosphate decarboxylase (268 aa).

Substrate contacts are provided by residues Asp37, 59–61 (KTH), 91–100 (DRKFADIGNT), Tyr217, and Arg235. Lys93 functions as the Proton donor in the catalytic mechanism.

It belongs to the OMP decarboxylase family.

The catalysed reaction is orotidine 5'-phosphate + H(+) = UMP + CO2. The protein operates within pyrimidine metabolism; UMP biosynthesis via de novo pathway; UMP from orotate: step 2/2. This is Orotidine 5'-phosphate decarboxylase (URA4) from Maudiozyma exigua (Yeast).